The sequence spans 68 residues: Large ribosomal subunit protein uL29 (68 aa).

Belongs to the universal ribosomal protein uL29 family.

The polypeptide is Large ribosomal subunit protein uL29 (Streptococcus uberis (strain ATCC BAA-854 / 0140J)).